The following is a 273-amino-acid chain: Ribosomal RNA small subunit methyltransferase A (273 aa).

Positions 18, 20, 45, 66, 91, and 113 each coordinate S-adenosyl-L-methionine.

Belongs to the class I-like SAM-binding methyltransferase superfamily. rRNA adenine N(6)-methyltransferase family. RsmA subfamily.

The protein localises to the cytoplasm. It carries out the reaction adenosine(1518)/adenosine(1519) in 16S rRNA + 4 S-adenosyl-L-methionine = N(6)-dimethyladenosine(1518)/N(6)-dimethyladenosine(1519) in 16S rRNA + 4 S-adenosyl-L-homocysteine + 4 H(+). Functionally, specifically dimethylates two adjacent adenosines (A1518 and A1519) in the loop of a conserved hairpin near the 3'-end of 16S rRNA in the 30S particle. May play a critical role in biogenesis of 30S subunits. This chain is Ribosomal RNA small subunit methyltransferase A, found in Salmonella newport (strain SL254).